The following is a 202-amino-acid chain: Small ribosomal subunit protein uS4 (202 aa).

In terms of domain architecture, S4 RNA-binding spans 90-152; that stretch reads MRLDNTVFRL…ERSRRLVETN (63 aa).

It belongs to the universal ribosomal protein uS4 family. As to quaternary structure, part of the 30S ribosomal subunit. Contacts protein S5. The interaction surface between S4 and S5 is involved in control of translational fidelity.

Functionally, one of the primary rRNA binding proteins, it binds directly to 16S rRNA where it nucleates assembly of the body of the 30S subunit. Its function is as follows. With S5 and S12 plays an important role in translational accuracy. The sequence is that of Small ribosomal subunit protein uS4 from Thermosynechococcus vestitus (strain NIES-2133 / IAM M-273 / BP-1).